Reading from the N-terminus, the 495-residue chain is Trigger factor (495 aa).

The PPIase FKBP-type domain maps to 169-254 (GDRVTIDYLG…VKEVAAPGEV (86 aa)). The interval 439 to 495 (ALLADDESEDKPAAKKAAPKKKAAKAEATEAAAEGEEAAVPKKKAAPKKKAAEDSAE) is disordered.

Belongs to the FKBP-type PPIase family. Tig subfamily.

Its subcellular location is the cytoplasm. It catalyses the reaction [protein]-peptidylproline (omega=180) = [protein]-peptidylproline (omega=0). Functionally, involved in protein export. Acts as a chaperone by maintaining the newly synthesized protein in an open conformation. Functions as a peptidyl-prolyl cis-trans isomerase. The chain is Trigger factor from Rhizobium rhizogenes (strain K84 / ATCC BAA-868) (Agrobacterium radiobacter).